Reading from the N-terminus, the 168-residue chain is Cell division inhibitor SulA (168 aa).

A ftsZ binding region spans residues 105 to 111; the sequence is ALETGNY. The lon protease binding stretch occupies residues 161 to 168; the sequence is RIHSGMVH.

It belongs to the SulA family. As to quaternary structure, interacts with FtsZ. Is rapidly cleaved and degraded by the Lon protease once DNA damage is repaired.

In terms of biological role, component of the SOS system and an inhibitor of cell division. Accumulation of SulA causes rapid cessation of cell division and the appearance of long, non-septate filaments. In the presence of GTP, binds a polymerization-competent form of FtsZ in a 1:1 ratio, thus inhibiting FtsZ polymerization and therefore preventing it from participating in the assembly of the Z ring. This mechanism prevents the premature segregation of damaged DNA to daughter cells during cell division. The polypeptide is Cell division inhibitor SulA (Cronobacter sakazakii (strain ATCC BAA-894) (Enterobacter sakazakii)).